A 643-amino-acid polypeptide reads, in one-letter code: Transmembrane protein 62 (643 aa).

A helical transmembrane segment spans residues 9-29; that stretch reads VVAGLAAAAVAALLLEHYGLA. Asn180 carries an N-linked (GlcNAc...) asparagine glycan. The next 4 membrane-spanning stretches (helical) occupy residues 431-451, 484-504, 532-552, and 572-592; these read IVAR…LITF, YSVL…GEII, GIIQ…WSLL, and IIPV…SCYF.

Its subcellular location is the membrane. The protein is Transmembrane protein 62 (Tmem62) of Mus musculus (Mouse).